Here is a 286-residue protein sequence, read N- to C-terminus: Shikimate dehydrogenase (NADP(+)) (286 aa).

Shikimate is bound by residues 19 to 21 (SVS) and Thr-66. Catalysis depends on Lys-70, which acts as the Proton acceptor. Shikimate is bound by residues Asn-91 and Asp-106. Residues 130–134 (GAGGS) and Ala-225 contribute to the NADP(+) site. Tyr-227 lines the shikimate pocket. Gly-248 lines the NADP(+) pocket.

Belongs to the shikimate dehydrogenase family. As to quaternary structure, homodimer.

It catalyses the reaction shikimate + NADP(+) = 3-dehydroshikimate + NADPH + H(+). Its pathway is metabolic intermediate biosynthesis; chorismate biosynthesis; chorismate from D-erythrose 4-phosphate and phosphoenolpyruvate: step 4/7. Involved in the biosynthesis of the chorismate, which leads to the biosynthesis of aromatic amino acids. Catalyzes the reversible NADPH linked reduction of 3-dehydroshikimate (DHSA) to yield shikimate (SA). This chain is Shikimate dehydrogenase (NADP(+)), found in Dehalococcoides mccartyi (strain CBDB1).